Here is a 545-residue protein sequence, read N- to C-terminus: Chaperonin GroEL 1 (545 aa).

Residues 30 to 33 (TLGP), Lys-51, 87 to 91 (DGTTT), Gly-415, and Asp-495 each bind ATP.

The protein belongs to the chaperonin (HSP60) family. Forms a cylinder of 14 subunits composed of two heptameric rings stacked back-to-back. Interacts with the co-chaperonin GroES.

It is found in the cytoplasm. The catalysed reaction is ATP + H2O + a folded polypeptide = ADP + phosphate + an unfolded polypeptide.. Together with its co-chaperonin GroES, plays an essential role in assisting protein folding. The GroEL-GroES system forms a nano-cage that allows encapsulation of the non-native substrate proteins and provides a physical environment optimized to promote and accelerate protein folding. The chain is Chaperonin GroEL 1 from Rhizobium meliloti (strain 1021) (Ensifer meliloti).